Consider the following 78-residue polypeptide: Large ribosomal subunit protein bL28 (78 aa).

Residues 1 to 20 (MSRVCQVTGKGPVTGNNISH) form a disordered region.

The protein belongs to the bacterial ribosomal protein bL28 family.

The sequence is that of Large ribosomal subunit protein bL28 from Pseudomonas fluorescens (strain ATCC BAA-477 / NRRL B-23932 / Pf-5).